Reading from the N-terminus, the 81-residue chain is Cell division protein ZapB (81 aa).

Positions 6 to 80 form a coiled coil; the sequence is EVFEKLEAKV…LQALLGRMEE (75 aa). The span at 38–47 shows a compositional bias: polar residues; the sequence is SLAQDVQSAQ. A disordered region spans residues 38-67; that stretch reads SLAQDVQSAQHQREELERENNHLKEQQSGW. Residues 48-62 show a composition bias toward basic and acidic residues; that stretch reads HQREELERENNHLKE.

It belongs to the ZapB family. In terms of assembly, homodimer. The ends of the coiled-coil dimer bind to each other, forming polymers. Interacts with FtsZ.

The protein localises to the cytoplasm. Functionally, non-essential, abundant cell division factor that is required for proper Z-ring formation. It is recruited early to the divisome by direct interaction with FtsZ, stimulating Z-ring assembly and thereby promoting cell division earlier in the cell cycle. Its recruitment to the Z-ring requires functional FtsA or ZipA. This Citrobacter koseri (strain ATCC BAA-895 / CDC 4225-83 / SGSC4696) protein is Cell division protein ZapB.